Here is a 276-residue protein sequence, read N- to C-terminus: Orotidine 5'-phosphate decarboxylase (276 aa).

Lys96 functions as the Proton donor in the catalytic mechanism.

The protein belongs to the OMP decarboxylase family. Type 2 subfamily.

It carries out the reaction orotidine 5'-phosphate + H(+) = UMP + CO2. It participates in pyrimidine metabolism; UMP biosynthesis via de novo pathway; UMP from orotate: step 2/2. The protein is Orotidine 5'-phosphate decarboxylase of Porphyromonas gingivalis (strain ATCC BAA-308 / W83).